We begin with the raw amino-acid sequence, 337 residues long: Tetraacyldisaccharide 4'-kinase (337 aa).

Residue 55 to 62 (NAGGTGKT) participates in ATP binding.

Belongs to the LpxK family.

The enzyme catalyses a lipid A disaccharide + ATP = a lipid IVA + ADP + H(+). It functions in the pathway glycolipid biosynthesis; lipid IV(A) biosynthesis; lipid IV(A) from (3R)-3-hydroxytetradecanoyl-[acyl-carrier-protein] and UDP-N-acetyl-alpha-D-glucosamine: step 6/6. Functionally, transfers the gamma-phosphate of ATP to the 4'-position of a tetraacyldisaccharide 1-phosphate intermediate (termed DS-1-P) to form tetraacyldisaccharide 1,4'-bis-phosphate (lipid IVA). The sequence is that of Tetraacyldisaccharide 4'-kinase from Dinoroseobacter shibae (strain DSM 16493 / NCIMB 14021 / DFL 12).